Reading from the N-terminus, the 462-residue chain is Acetyl-CoA decarbonylase/synthase complex subunit gamma (462 aa).

In terms of domain architecture, 4Fe-4S spans 1–60; it reads MAQLSAMDVYNLLPKANCGACGCKTCMEFATKLVNREAKPEDCPKLDDESLEKLQELLAP. 4 residues coordinate [4Fe-4S] cluster: Cys-18, Cys-21, Cys-26, and Cys-43.

In terms of assembly, heterodimer of delta and gamma chains. The ACDS complex is made up of alpha, epsilon, beta, gamma and delta chains with a probable stoichiometry of (alpha(2)epsilon(2))(4)-beta(8)-(gamma(1)delta(1))(8). Requires corrinoid as cofactor. It depends on [4Fe-4S] cluster as a cofactor.

It catalyses the reaction 5,6,7,8-tetrahydrosarcinapterin + methyl-Co(III)-[corrinoid Fe-S protein] = 5-methyltetrahydrosarcinapterin + Co(I)-[corrinoid Fe-S protein] + H(+). Part of a complex that catalyzes the reversible cleavage of acetyl-CoA, allowing autotrophic growth from CO(2). The sequence is that of Acetyl-CoA decarbonylase/synthase complex subunit gamma from Methanopyrus kandleri (strain AV19 / DSM 6324 / JCM 9639 / NBRC 100938).